The chain runs to 365 residues: MNILKISKQTLRNNIKIIREYIGNAKMCFPVKANAYGHGIEDIVENTHDLVDFFAVANSLEAFRVTAVAKNPVLVFGVIYYEYIEKMISENIRVSIQDYEYIEKLEQIAKELDKKVYAHININTGMNRMGVDYNDACRTIQRAYESDWLILEGVYSHLACADNRDHPTNIKQKNRFDSIVKFTKGLSQDIICHLSNSYGFLGQKGICYDMVRPGILSYGFLPEFYVDRVIREIKPIARLLSKVVKIITLQEGEGVGYSLIYRGFEGEQLAVIPIGYGDGFPRELGDRGFVNINDVMYPMAGRMSMDGLTVSLGINEYDVKVGDTVELISAIPRNRNSAFSIAKQTNTIEYDIMSTLNDRIIRKII.

Lys32 (proton acceptor; specific for D-alanine) is an active-site residue. Position 32 is an N6-(pyridoxal phosphate)lysine (Lys32). Residue Arg128 coordinates substrate. Tyr257 (proton acceptor; specific for L-alanine) is an active-site residue. Met305 is a substrate binding site.

The protein belongs to the alanine racemase family. Pyridoxal 5'-phosphate is required as a cofactor.

It catalyses the reaction L-alanine = D-alanine. It participates in amino-acid biosynthesis; D-alanine biosynthesis; D-alanine from L-alanine: step 1/1. Catalyzes the interconversion of L-alanine and D-alanine. May also act on other amino acids. In Francisella tularensis subsp. holarctica (strain LVS), this protein is Alanine racemase (alr).